The primary structure comprises 225 residues: Ribonuclease 3 (225 aa).

Residues 7-129 form the RNase III domain; that stretch reads IPRLCRTLGY…IIGAIYLDSD (123 aa). Glu42 contributes to the Mg(2+) binding site. Asp46 is an active-site residue. Mg(2+) is bound by residues Asp115 and Glu118. Glu118 is an active-site residue. Residues 155 to 225 enclose the DRBM domain; sequence DPKTLLQEHL…AAQVLELIKK (71 aa).

It belongs to the ribonuclease III family. As to quaternary structure, homodimer. Requires Mg(2+) as cofactor.

The protein resides in the cytoplasm. It catalyses the reaction Endonucleolytic cleavage to 5'-phosphomonoester.. Digests double-stranded RNA. Involved in the processing of primary rRNA transcript to yield the immediate precursors to the large and small rRNAs (23S and 16S). Processes some mRNAs, and tRNAs when they are encoded in the rRNA operon. Processes pre-crRNA and tracrRNA of type II CRISPR loci if present in the organism. In Shewanella piezotolerans (strain WP3 / JCM 13877), this protein is Ribonuclease 3.